The chain runs to 178 residues: Arginine repressor (178 aa).

The interval 1-21 (MSQAQENEHAGPAVPQTRTAR) is disordered.

This sequence belongs to the ArgR family.

The protein localises to the cytoplasm. It functions in the pathway amino-acid biosynthesis; L-arginine biosynthesis [regulation]. Regulates arginine biosynthesis genes. The polypeptide is Arginine repressor (Streptomyces avermitilis (strain ATCC 31267 / DSM 46492 / JCM 5070 / NBRC 14893 / NCIMB 12804 / NRRL 8165 / MA-4680)).